We begin with the raw amino-acid sequence, 55 residues long: Spermatid nuclear transition protein 1 (55 aa).

A compositionally biased stretch (basic residues) spans 1-42; it reads MSTSRKLKSQGTRRGKNRTPHKGVKRGCSKRKYRKSSLKSRK. The interval 1-55 is disordered; sequence MSTSRKLKSQGTRRGKNRTPHKGVKRGCSKRKYRKSSLKSRKRCDDANRNFRSHL. Residues Ser-9, Ser-36, Ser-37, and Ser-40 each carry the phosphoserine modification.

This sequence belongs to the nuclear transition protein 1 family. As to expression, testis.

The protein localises to the nucleus. It is found in the chromosome. In terms of biological role, plays a key role in the replacement of histones to protamine in the elongating spermatids of mammals. In condensing spermatids, loaded onto the nucleosomes, where it promotes the recruitment and processing of protamines, which are responsible for histone eviction. This is Spermatid nuclear transition protein 1 (TNP1) from Ovis aries (Sheep).